A 256-amino-acid chain; its full sequence is MWSKKFTLKKLILGGYLFAQKVYCEDESNSIYGTWSSKSNQVFTGPGFYDPVDELLIEPSLPGLSYSFTEDGWYEEATYQVSGNPRNPTCPMASLIYQHGTYNISENGTLVLNPIEVDGRQLFSDPCNDDGVSTYSRYNQTETFKEYAVGIDPYHGIYTLQLYQYDGTPMQPLYLAYRPPMMLPTETLNPTSSATSTDDPSSNKKRSLRSLVRRSLENRHKTNAIKRQNTSFLTSNAIWYISAGMLGVGSLLFLAF.

Positions M1–C24 are cleaved as a signal peptide. At E25–S235 the chain is on the lumenal side. N-linked (GlcNAc...) asparagine glycosylation is found at N103, N107, and N139. The segment at E186 to R209 is disordered. Over residues P190 to P200 the composition is skewed to low complexity. The helical transmembrane segment at N236–F256 threads the bilayer.

It belongs to the ROT1 family. In terms of processing, N-glycosylated.

Its subcellular location is the endoplasmic reticulum membrane. Its function is as follows. Required for normal levels of the cell wall 1,6-beta-glucan. Involved in a protein folding machinery chaperoning proteins acting in various physiological processes including cell wall synthesis and lysis of autophagic bodies. Controls actin cytoskeleton polarization to the mother-bud neck and CLB2 protein stability. In Saccharomyces cerevisiae (strain ATCC 204508 / S288c) (Baker's yeast), this protein is Protein ROT1 (ROT1).